The sequence spans 1939 residues: Myosin-8 (1939 aa).

Positions 35-84 (DAKTSVFVAEPKASYVKSTIQSKEGGKVTVKTEGGATLTVREDQVFPMNP) constitute a Myosin N-terminal SH3-like domain. Residues threonine 66 and threonine 71 each carry the phosphothreonine modification. The Myosin motor domain maps to 88-783 (DKIEDMAMMT…LLGLLEEMRD (696 aa)). Lysine 132 is subject to N6,N6,N6-trimethyllysine. Residue 181-188 (GESGAGKT) participates in ATP binding. Tyrosine 391 carries the phosphotyrosine modification. Threonine 421 carries the post-translational modification Phosphothreonine. Tyrosine 426 is subject to Phosphotyrosine. A Phosphoserine modification is found at serine 627. Residues 660–682 (LNKLMTNLRSTHPHFVRCIIPNE) are actin-binding. Position 758 is a pros-methylhistidine (histidine 758). The interval 762 to 776 (KFGHTKVFFKAGLLG) is actin-binding. The IQ domain maps to 783-815 (DEKLSQIITRTQAVCRGFLMRVEYQKMLQRREA). A coiled-coil region spans residues 844 to 1939 (LLKSAETEKE…REVHTKISAE (1096 aa)). A phosphoserine mark is found at serine 1093, serine 1097, serine 1163, and serine 1238. Phosphothreonine is present on threonine 1242. Residue serine 1244 is modified to Phosphoserine. Threonine 1256 carries the phosphothreonine modification. Serine 1262 is modified (phosphoserine). Phosphothreonine occurs at positions 1266 and 1287. Phosphoserine is present on residues serine 1293, serine 1304, and serine 1307. Phosphotyrosine is present on tyrosine 1465. Threonine 1468 is subject to Phosphothreonine. The residue at position 1475 (serine 1475) is a Phosphoserine. Residue tyrosine 1493 is modified to Phosphotyrosine. Serine 1496 bears the Phosphoserine mark. At threonine 1502 the chain carries Phosphothreonine. Position 1515 is a phosphoserine (serine 1515). Phosphothreonine is present on threonine 1518. Residues serine 1555, serine 1575, serine 1601, serine 1604, serine 1715, and serine 1727 each carry the phosphoserine modification. At threonine 1731 the chain carries Phosphothreonine. The residue at position 1740 (serine 1740) is a Phosphoserine.

It belongs to the TRAFAC class myosin-kinesin ATPase superfamily. Myosin family. Muscle myosin is a hexameric protein that consists of 2 heavy chain subunits (MHC), 2 alkali light chain subunits (MLC) and 2 regulatory light chain subunits (MLC-2).

It localises to the cytoplasm. The protein localises to the myofibril. Functionally, muscle contraction. The polypeptide is Myosin-8 (MYH8) (Canis lupus familiaris (Dog)).